The following is a 138-amino-acid chain: MVKLIPRISSRRNGRIRLRKNKHKIPQGVIHIQASLQNTIVTVTDVRGRVVSWASAGSAGFKGTTRRTPFAAQTAATNAIHTAINQGMREADVLIKGPGLGRDAALRAIRRSGIRLELILDVTPMPHNGCRPPKKRRV.

This sequence belongs to the universal ribosomal protein uS11 family. Part of the 30S ribosomal subunit.

The protein localises to the plastid. The protein is Small ribosomal subunit protein uS11c of Cuscuta obtusiflora (Peruvian dodder).